Here is a 1538-residue protein sequence, read N- to C-terminus: CLIP-associating protein 1 (1538 aa).

HEAT repeat units lie at residues 87 to 124 (AQIG…QAAN) and 163 to 200 (LTLS…HVGE). The interval 235-292 (SANDKNFDDEDSVDGNRPSSASSTSSKAPPSSRRNVGMGTTRRLGSSTLGSKSSAAKE) is disordered. Ser-246 is modified (phosphoserine). Over residues 251 to 268 (RPSSASSTSSKAPPSSRR) the composition is skewed to low complexity. 2 HEAT repeats span residues 405–440 (HGAE…IRHT) and 441–477 (HIPR…EWQT). A disordered region spans residues 543-783 (SDSIVSLPQS…DRFGLGQPGR (241 aa)). Phosphoserine occurs at positions 545, 548, 558, 559, and 568. Residues 548–567 (SLPQSDRSSSSSQESLNRPL) are compositionally biased toward low complexity. Positions 574-594 (TGSTTSRASTVSTKSVSTTGS) are enriched in low complexity. Position 600 is a phosphoserine (Ser-600). Residues 606 to 628 (AAASAKSKVSSSSGTTPFSSAAA) are compositionally biased toward low complexity. Phosphoserine is present on residues Ser-636, Ser-646, Ser-647, and Ser-649. Residues 645–658 (QSSGSATNVASTPD) show a composition bias toward polar residues. A Phosphothreonine modification is found at Thr-656. Residues 662 to 785 (RSRAKVVSQS…FGLGQPGRIP (124 aa)) are interaction with microtubules, MAPRE1 and MAPRE3. Positions 673 to 692 (RSRSANPAGAGSRSSSPGKL) are enriched in low complexity. Phosphoserine occurs at positions 684, 688, 695, and 705. The span at 693 to 705 (LGSGYGGLTGGSS) shows a compositional bias: gly residues. Thr-711 carries the phosphothreonine modification. A Phosphoserine modification is found at Ser-714. Residues 724-733 (QGCSRETSPN) show a composition bias toward polar residues. 3 positions are modified to phosphoserine: Ser-787, Ser-797, and Ser-823. One copy of the HEAT 5 repeat lies at 974–1011 (QQFNILMRFIVDQTQTPNLKVKVAILKYIESLARQMDP). Disordered stretches follow at residues 1080 to 1120 (HLKN…CSHG) and 1136 to 1156 (AKHP…SHKA). Residues 1082-1097 (KNSSNTSVGSPSNTIG) show a composition bias toward polar residues. Residue Ser-1091 is modified to Phosphoserine. Phosphothreonine is present on residues Thr-1095 and Thr-1099. A compositionally biased stretch (low complexity) spans 1106–1115 (SRTSPLTSPT). Ser-1113 carries the phosphoserine modification. Residues Ser-1196 and Ser-1223 each carry the phosphoserine modification. Residues 1215–1238 (VSRDGGAASPATEGRGGSEVEGGR) are disordered. The interval 1254–1538 (RAFPGPRARD…SSSSDVSTHS (285 aa)) is interaction with CLIP2. The tract at residues 1254–1538 (RAFPGPRARD…SSSSDVSTHS (285 aa)) is interaction with PHLDB2 and RSN. Residues 1256–1538 (FPGPRARDYN…SSSSDVSTHS (283 aa)) are localization to kinetochores. The stretch at 1299–1330 (DHSDLVADLLKELSNHNERVEERKGALLELLK) forms a coiled coil. HEAT repeat units lie at residues 1342 to 1379 (EHFK…NQPA) and 1460 to 1497 (QLLV…VIGE).

This sequence belongs to the CLASP family. As to quaternary structure, interacts with CLIP2, ERC1, MAPRE1, MAPRE3, microtubules, PHLDB2 and RSN. The interaction with ERC1 may be mediated by PHLDB2. Interacts with GCC2; recruits CLASP1 to Golgi membranes. Interacts with MACF1. Interacts with mtcl2 and MTCL1.

It localises to the cytoplasm. It is found in the cytoskeleton. Its subcellular location is the microtubule organizing center. The protein resides in the centrosome. The protein localises to the chromosome. It localises to the centromere. It is found in the kinetochore. Its subcellular location is the spindle. The protein resides in the golgi apparatus. The protein localises to the trans-Golgi network. Its function is as follows. Microtubule plus-end tracking protein that promotes the stabilization of dynamic microtubules. Involved in the nucleation of noncentrosomal microtubules originating from the trans-Golgi network (TGN). Required for the polarization of the cytoplasmic microtubule arrays in migrating cells towards the leading edge of the cell. May act at the cell cortex to enhance the frequency of rescue of depolymerizing microtubules by attaching their plus-ends to cortical platforms composed of ERC1 and PHLDB2. This cortical microtubule stabilizing activity is regulated at least in part by phosphatidylinositol 3-kinase signaling. Also performs a similar stabilizing function at the kinetochore which is essential for the bipolar alignment of chromosomes on the mitotic spindle. This is CLIP-associating protein 1 (CLASP1) from Homo sapiens (Human).